The chain runs to 231 residues: Orotidine 5'-phosphate decarboxylase (231 aa).

Substrate contacts are provided by residues D11, K34, 61 to 70 (DLKLHDIPNT), T117, R179, Q188, G208, and R209. The active-site Proton donor is K63.

It belongs to the OMP decarboxylase family. Type 1 subfamily. As to quaternary structure, homodimer.

The catalysed reaction is orotidine 5'-phosphate + H(+) = UMP + CO2. Its pathway is pyrimidine metabolism; UMP biosynthesis via de novo pathway; UMP from orotate: step 2/2. Its function is as follows. Catalyzes the decarboxylation of orotidine 5'-monophosphate (OMP) to uridine 5'-monophosphate (UMP). The sequence is that of Orotidine 5'-phosphate decarboxylase from Streptococcus thermophilus (strain ATCC BAA-491 / LMD-9).